A 359-amino-acid polypeptide reads, in one-letter code: Membrane-bound lytic murein transglycosylase C (359 aa).

Residues 1 to 16 form the signal peptide; sequence MKKYLALALIAPLLIS. Residue C17 is the site of N-palmitoyl cysteine attachment. C17 carries S-diacylglycerol cysteine lipidation.

Belongs to the transglycosylase Slt family.

Its subcellular location is the cell outer membrane. It carries out the reaction Exolytic cleavage of the (1-&gt;4)-beta-glycosidic linkage between N-acetylmuramic acid (MurNAc) and N-acetylglucosamine (GlcNAc) residues in peptidoglycan, from either the reducing or the non-reducing ends of the peptidoglycan chains, with concomitant formation of a 1,6-anhydrobond in the MurNAc residue.. Functionally, murein-degrading enzyme. May play a role in recycling of muropeptides during cell elongation and/or cell division. In Escherichia coli (strain SMS-3-5 / SECEC), this protein is Membrane-bound lytic murein transglycosylase C.